The sequence spans 118 residues: Eukaryotic translation initiation factor 4E-binding protein 1 (118 aa).

Composition is skewed to polar residues over residues 1–12 (MSGGSSCSQTPS) and 34–48 (YSTT…TTPG). 2 disordered regions span residues 1 to 20 (MSGG…ATRR) and 25 to 48 (DGVQ…TTPG). Ser-2 carries the post-translational modification N-acetylserine. Residue Thr-37 is modified to Phosphothreonine; by MTOR. Phosphothreonine is present on Thr-41. Ser-44 is modified (phosphoserine). Thr-46 bears the Phosphothreonine; by MTOR mark. Phosphothreonine is present on Thr-50. A Phosphotyrosine modification is found at Tyr-54. Positions 54 to 60 (YDRKFLM) match the YXXXXLphi motif motif. Residue Lys-57 forms a Glycyl lysine isopeptide (Lys-Gly) (interchain with G-Cter in ubiquitin) linkage. A disordered region spans residues 64–118 (NSPVTKTPPRDLPTIPGVTSPSSDEPPMEASQSHLRNSPEDKRAGGEESQFEMDI). Ser-65 is subject to Phosphoserine; by DYRK2, MAPK1, MAPK3 and MTOR. Thr-70 is subject to Phosphothreonine; by MTOR. Thr-77 carries the phosphothreonine modification. 2 positions are modified to phosphoserine: Ser-83 and Ser-96. A compositionally biased stretch (basic and acidic residues) spans 100-109 (NSPEDKRAGG). Phosphoserine; by DYRK2 is present on Ser-101. Ser-112 carries the phosphoserine modification. A TOS motif motif is present at residues 114 to 118 (FEMDI).

The protein belongs to the eIF4E-binding protein family. In terms of assembly, hypophosphorylated EIF4EBP1 competes with EIF4G1/EIF4G3 to interact with EIF4E; insulin stimulated MAP-kinase (MAPK1 and MAPK3) or mTORC1 phosphorylation of EIF4EBP1 causes dissociation of the complex allowing EIF4G1/EIF4G3 to bind and consequent initiation of translation. Interacts (via TOS motif) with RPTOR; promoting phosphorylation by mTORC1. Post-translationally, phosphorylated on serine and threonine residues in response to insulin, EGF and PDGF. Phosphorylation at Thr-37, Thr-46, Ser-65 and Thr-70, corresponding to the hyperphosphorylated form, is regulated by mTORC1 and abolishes binding to EIF4E. Ubiquitinated: when eIF4E levels are low, hypophosphorylated form is ubiquitinated by the BCR(KLHL25) complex, leading to its degradation and serving as a homeostatic mechanism to maintain translation and prevent eIF4E inhibition when eIF4E levels are low. Not ubiquitinated when hyperphosphorylated (at Thr-37, Thr-46, Ser-65 and Thr-70) or associated with eIF4E.

It localises to the cytoplasm. The protein localises to the nucleus. Its function is as follows. Repressor of translation initiation that regulates EIF4E activity by preventing its assembly into the eIF4F complex: hypophosphorylated form competes with EIF4G1/EIF4G3 and strongly binds to EIF4E, leading to repress translation. In contrast, hyperphosphorylated form dissociates from EIF4E, allowing interaction between EIF4G1/EIF4G3 and EIF4E, leading to initiation of translation. Mediates the regulation of protein translation by hormones, growth factors and other stimuli that signal through the MAP kinase and mTORC1 pathways. The polypeptide is Eukaryotic translation initiation factor 4E-binding protein 1 (EIF4EBP1) (Homo sapiens (Human)).